Reading from the N-terminus, the 294-residue chain is Cytidine deaminase (294 aa).

2 CMP/dCMP-type deaminase domains span residues 48–168 (DEDA…FGPK) and 186–294 (LTGD…VLLA). A substrate-binding site is contributed by 89–91 (NME). His102 contacts Zn(2+). The Proton donor role is filled by Glu104. Residues Cys129 and Cys132 each contribute to the Zn(2+) site.

Belongs to the cytidine and deoxycytidylate deaminase family. Homodimer. Zn(2+) serves as cofactor.

It carries out the reaction cytidine + H2O + H(+) = uridine + NH4(+). The catalysed reaction is 2'-deoxycytidine + H2O + H(+) = 2'-deoxyuridine + NH4(+). In terms of biological role, this enzyme scavenges exogenous and endogenous cytidine and 2'-deoxycytidine for UMP synthesis. In Escherichia coli O7:K1 (strain IAI39 / ExPEC), this protein is Cytidine deaminase.